A 429-amino-acid chain; its full sequence is Enolase (429 aa).

Glutamine 167 is a (2R)-2-phosphoglycerate binding site. The active-site Proton donor is glutamate 209. 3 residues coordinate Mg(2+): aspartate 246, glutamate 289, and aspartate 316. 4 residues coordinate (2R)-2-phosphoglycerate: lysine 341, arginine 370, serine 371, and lysine 392. Lysine 341 serves as the catalytic Proton acceptor.

This sequence belongs to the enolase family. As to quaternary structure, component of the RNA degradosome, a multiprotein complex involved in RNA processing and mRNA degradation. It depends on Mg(2+) as a cofactor.

The protein localises to the cytoplasm. It localises to the secreted. Its subcellular location is the cell surface. The enzyme catalyses (2R)-2-phosphoglycerate = phosphoenolpyruvate + H2O. It participates in carbohydrate degradation; glycolysis; pyruvate from D-glyceraldehyde 3-phosphate: step 4/5. Catalyzes the reversible conversion of 2-phosphoglycerate (2-PG) into phosphoenolpyruvate (PEP). It is essential for the degradation of carbohydrates via glycolysis. In Ectopseudomonas mendocina (strain ymp) (Pseudomonas mendocina), this protein is Enolase.